The sequence spans 542 residues: Chaperonin GroEL 1 (542 aa).

ATP is bound by residues 29 to 32 (TIGP), 86 to 90 (DGTTT), Gly-415, 479 to 481 (NAA), and Asp-495.

It belongs to the chaperonin (HSP60) family. As to quaternary structure, forms a cylinder of 14 subunits composed of two heptameric rings stacked back-to-back. Interacts with the co-chaperonin GroES.

The protein localises to the cytoplasm. It catalyses the reaction ATP + H2O + a folded polypeptide = ADP + phosphate + an unfolded polypeptide.. Its function is as follows. Together with its co-chaperonin GroES, plays an essential role in assisting protein folding. The GroEL-GroES system forms a nano-cage that allows encapsulation of the non-native substrate proteins and provides a physical environment optimized to promote and accelerate protein folding. The protein is Chaperonin GroEL 1 of Streptomyces avermitilis (strain ATCC 31267 / DSM 46492 / JCM 5070 / NBRC 14893 / NCIMB 12804 / NRRL 8165 / MA-4680).